We begin with the raw amino-acid sequence, 448 residues long: MVPAVNPPTTSHHVAVIGAGAAGLVAARELRREGHSVVVFERGNQIGGVWAYTPNVEPDPLSIDPTRPVIHSSLYSSLRTIIPRECMGFTDFPFSTGPENKSRDPRRHPGHIEVLAYLKDFARKFKMDEMIRFETEVVRAEPAAENPKKWRVESRNSGDISDEIYDAVVVCNGHYTEPRHALIPGIDSCPGKQIHSHNYRIPDQFKDQLNSGSSVSGVDISRDIVNVTKEVHISSRSTKPETYEKLSGYDNLWLHSNIETVREDGSVVFKNGKTVYADTIMHCTGYKYYFPFLDTKGEVTVEDNRVGPLYKHVFPPALSPGLSFIGLPWQVILFPMFELQSKWVAAVLAGRFYSKLEASCIPKRYTHLMAELDSQFVYDNWLADQCDYPRIEKWREQMFYKVFKRIQSQSSTYKDDWDDDHLIAEAYEDFVKFPSNYPSSLIEREYTS.

18–23 (GAGAAG) serves as a coordination point for FAD. 212–217 (GSSVSG) is an NADP(+) binding site.

Belongs to the FMO family. FAD serves as cofactor.

Functionally, catalyzes the conversion of methylthioalkyl glucosinolates of any chain length into methylsulfinylalkyl glucosinolates. This Arabidopsis thaliana (Mouse-ear cress) protein is Putative flavin-containing monooxygenase FMO GS-OX-like 10.